Here is a 433-residue protein sequence, read N- to C-terminus: 3-phosphoshikimate 1-carboxyvinyltransferase (433 aa).

K23, S24, and R28 together coordinate 3-phosphoshikimate. K23 lines the phosphoenolpyruvate pocket. Phosphoenolpyruvate-binding residues include G95 and R123. 6 residues coordinate 3-phosphoshikimate: S170, S171, Q172, S198, D317, and K344. Phosphoenolpyruvate is bound at residue Q172. D317 functions as the Proton acceptor in the catalytic mechanism. Phosphoenolpyruvate-binding residues include R348, R391, and K416.

This sequence belongs to the EPSP synthase family. In terms of assembly, monomer.

Its subcellular location is the cytoplasm. The catalysed reaction is 3-phosphoshikimate + phosphoenolpyruvate = 5-O-(1-carboxyvinyl)-3-phosphoshikimate + phosphate. The protein operates within metabolic intermediate biosynthesis; chorismate biosynthesis; chorismate from D-erythrose 4-phosphate and phosphoenolpyruvate: step 6/7. Functionally, catalyzes the transfer of the enolpyruvyl moiety of phosphoenolpyruvate (PEP) to the 5-hydroxyl of shikimate-3-phosphate (S3P) to produce enolpyruvyl shikimate-3-phosphate and inorganic phosphate. The sequence is that of 3-phosphoshikimate 1-carboxyvinyltransferase from Neisseria meningitidis serogroup C / serotype 2a (strain ATCC 700532 / DSM 15464 / FAM18).